An 834-amino-acid chain; its full sequence is Putative COX1/OXI3 intron 1 protein (834 aa).

Positions Met-162 to Gly-188 are disordered. The span at Asn-167–Gly-181 shows a compositional bias: polar residues. The Reverse transcriptase domain occupies Leu-296–Ile-577.

It is found in the mitochondrion. This is Putative COX1/OXI3 intron 1 protein (AI1) from Saccharomyces cerevisiae (strain ATCC 204508 / S288c) (Baker's yeast).